Reading from the N-terminus, the 447-residue chain is ATP-dependent protease ATPase subunit HslU (447 aa).

ATP-binding positions include isoleucine 17 and 59–64 (GVGKTE). A disordered region spans residues 136–160 (PPARGGFQGEPTAEEKPTEKKESAT). Positions 148-159 (AEEKPTEKKESA) are enriched in basic and acidic residues. The ATP site is built by aspartate 260, glutamate 325, and arginine 397.

It belongs to the ClpX chaperone family. HslU subfamily. In terms of assembly, a double ring-shaped homohexamer of HslV is capped on each side by a ring-shaped HslU homohexamer. The assembly of the HslU/HslV complex is dependent on binding of ATP.

It is found in the cytoplasm. Functionally, ATPase subunit of a proteasome-like degradation complex; this subunit has chaperone activity. The binding of ATP and its subsequent hydrolysis by HslU are essential for unfolding of protein substrates subsequently hydrolyzed by HslV. HslU recognizes the N-terminal part of its protein substrates and unfolds these before they are guided to HslV for hydrolysis. The protein is ATP-dependent protease ATPase subunit HslU of Coxiella burnetii (strain Dugway 5J108-111).